The sequence spans 24 residues: LSFQQVKEKVCKVEAKIGKKLPFC.

A disulfide bond links C11 and C24. Residue C24 is modified to Cysteine amide.

As to expression, expressed by the venom gland.

The protein localises to the secreted. Functionally, wasp venom peptide that acts as a potent mast cell degranulating peptide without hemolytic activity. Shows neuroprotective effect, since it prevents the death of dopaminergic neurons of the brain substantia nigra region and recovers motor deficit in a 6-hydroxydopamine (6-OHDA)-induced murine model of Parkinson disease. This Parachartergus fraternus (Artistic wasp) protein is Fraternine.